The sequence spans 252 residues: 3-dehydroquinate dehydratase (252 aa).

Residues 46–48 (EWR) and R82 each bind 3-dehydroquinate. The Proton donor/acceptor role is filled by H143. The active-site Schiff-base intermediate with substrate is K170. 3-dehydroquinate is bound by residues R212, S231, and Q235.

The protein belongs to the type-I 3-dehydroquinase family. As to quaternary structure, homodimer.

It catalyses the reaction 3-dehydroquinate = 3-dehydroshikimate + H2O. It functions in the pathway metabolic intermediate biosynthesis; chorismate biosynthesis; chorismate from D-erythrose 4-phosphate and phosphoenolpyruvate: step 3/7. Functionally, involved in the third step of the chorismate pathway, which leads to the biosynthesis of aromatic amino acids. Catalyzes the cis-dehydration of 3-dehydroquinate (DHQ) and introduces the first double bond of the aromatic ring to yield 3-dehydroshikimate. This is 3-dehydroquinate dehydratase from Listeria welshimeri serovar 6b (strain ATCC 35897 / DSM 20650 / CCUG 15529 / CIP 8149 / NCTC 11857 / SLCC 5334 / V8).